The chain runs to 1169 residues: Protein MBD-R2 (1169 aa).

Residues 5–59 form a THAP-type zinc finger; the sequence is CCVANCPSTSRLLEHNGVTYHSFPLDPIIRAIWIKNSRISLERQITKSVLVCSRH. Disordered stretches follow at residues 99–122, 140–211, and 347–394; these read RALQ…STND, SAER…KYSN, and AEEG…CAPQ. Over residues 107 to 122 the composition is skewed to polar residues; it reads EGTTETPGNAQSSTND. A compositionally biased stretch (basic and acidic residues) spans 140-160; the sequence is SAERKATEEGKTGKAADDVKN. Positions 190-202 are enriched in low complexity; that stretch reads PAPGSASSSNSPL. The segment covering 353-363 has biased composition (polar residues); sequence KSPTPVGTPVS. The 70-residue stretch at 445 to 514 folds into the MBD domain; it reads KPTVIVQDWR…DVYDFSIHRR (70 aa). Positions 527 to 565 are disordered; that stretch reads GYNPQPPPKPRPMDVSMNSTLDQSITSQHSLPSTPMPVK. The span at 542-559 shows a compositional bias: polar residues; that stretch reads SMNSTLDQSITSQHSLPS. The segment at 640–665 adopts a C2H2-type zinc-finger fold; the sequence is YVCPREDCAKTYRKEDFLLIHIRHYH. The tract at residues 714-890 is disordered; sequence QDLQQSRSFK…INAALAPPPA (177 aa). Over residues 726-742 the composition is skewed to low complexity; that stretch reads SVSATATSSTPSDITPT. Positions 774 to 784 are enriched in polar residues; that stretch reads PTQSFNPSLSR. The segment covering 798 to 810 has biased composition (basic residues); the sequence is SGSRKSNRQRSQR. Composition is skewed to polar residues over residues 853 to 862 and 869 to 881; these read AATTPISSID and SVST…QTDI.

As to quaternary structure, component of the non-specific lethal (NLS) histone acetyltransferase complex at least composed of mof, nls1, dgt1/NSL2, Rcd1/NSL3, Rcd5/MCRS2, MBD-R2 and wds.

Its subcellular location is the nucleus. It is found in the chromosome. Functionally, component of the non-specific lethal (NLS) complex, a multiprotein complex that promotes expression of housekeeping genes on X chromosome and autosomes. This Drosophila melanogaster (Fruit fly) protein is Protein MBD-R2.